The primary structure comprises 319 residues: Cobalamin biosynthesis protein CbiB (319 aa).

Helical transmembrane passes span 56–76 (VMWV…LALA), 82–102 (WFGW…RSLA), 153–173 (VDGI…LAMA), and 296–316 (LMWV…CGLS).

Belongs to the CobD/CbiB family.

The protein resides in the cell membrane. It participates in cofactor biosynthesis; adenosylcobalamin biosynthesis. In terms of biological role, converts cobyric acid to cobinamide by the addition of aminopropanol on the F carboxylic group. However, the true cosubstrate could be (R)-1-amino-2-propanol O-2-phosphate, leading to cobinamide phosphate. This is Cobalamin biosynthesis protein CbiB from Salmonella paratyphi A (strain ATCC 9150 / SARB42).